The sequence spans 258 residues: Aspartate/glutamate leucyltransferase (258 aa).

Belongs to the R-transferase family. Bpt subfamily.

It is found in the cytoplasm. The enzyme catalyses N-terminal L-glutamyl-[protein] + L-leucyl-tRNA(Leu) = N-terminal L-leucyl-L-glutamyl-[protein] + tRNA(Leu) + H(+). It carries out the reaction N-terminal L-aspartyl-[protein] + L-leucyl-tRNA(Leu) = N-terminal L-leucyl-L-aspartyl-[protein] + tRNA(Leu) + H(+). In terms of biological role, functions in the N-end rule pathway of protein degradation where it conjugates Leu from its aminoacyl-tRNA to the N-termini of proteins containing an N-terminal aspartate or glutamate. The protein is Aspartate/glutamate leucyltransferase of Rhodopseudomonas palustris (strain BisB18).